Here is a 518-residue protein sequence, read N- to C-terminus: Suppressor of hairless homolog (518 aa).

Positions Glu22–Pro59 are disordered. Residues Asp24 to Val34 are compositionally biased toward basic and acidic residues. The segment covering Gly36–Pro50 has biased composition (polar residues). 3 consecutive DNA-binding regions follow at residues Lys89–Arg96, Arg223–Arg232, and Arg296–Tyr328. The 91-residue stretch at Pro386 to Thr476 folds into the IPT/TIG domain.

It belongs to the Su(H) family. Interacts with activated Notch proteins.

The protein localises to the nucleus. Functionally, transcriptional regulator that plays a central role in Notch signaling, a signaling pathway involved in cell-cell communication that regulates a broad spectrum of cell-fate determinations. Acts as a transcriptional repressor when it is not associated with Notch proteins. When associated with some Notch protein, it acts as a transcriptional activator that activates transcription of Notch target genes. This is Suppressor of hairless homolog (RBP-JK) from Halocynthia roretzi (Sea squirt).